The chain runs to 1755 residues: Transposon TyH3 Gag-Pol polyprotein (1755 aa).

Polar residues-rich tracts occupy residues 1–23 (MESQ…SVTS), 48–60 (TKAN…TPAS), and 127–152 (QSQF…GNTF). Disordered stretches follow at residues 1–93 (MESQ…MMTQ), 126–173 (PQSQ…RPPP), and 352–421 (GSRN…SKST). The segment covering 153–165 (TDSSSADSDMTST) has biased composition (low complexity). Residues 299–401 (NNGIHINNKV…NSKSKTARAH (103 aa)) are RNA-binding. Residues 402-418 (NVSTSNNSPSTDNDSIS) are compositionally biased toward low complexity. Ser416 carries the post-translational modification Phosphoserine. Catalysis depends on Asp461, which acts as the For protease activity; shared with dimeric partner. The integrase-type zinc finger-like stretch occupies residues 583–640 (NVHTSESTRKYPYPFIHRMLAHANAQTIRYSLKNNTITYFNESDVDWSSAIDYQCPDC). Residues 660 to 835 (NSYEPFQYLH…AGLDISTLLP (176 aa)) form the Integrase catalytic domain. The Mg(2+) site is built by Asp671 and Asp736. Disordered regions lie at residues 956 to 1087 (SKAV…ETEK), 1092 to 1111 (RSPS…NIVP), and 1130 to 1187 (DLPL…DNET). A compositionally biased stretch (low complexity) spans 960–969 (SPTDSTPPST). Positions 1005–1015 (STPQISNIEST) are enriched in polar residues. The span at 1038–1053 (ESSHASKSKDFRHSDS) shows a compositional bias: basic and acidic residues. Composition is skewed to polar residues over residues 1054 to 1082 (YSEN…QISD) and 1101 to 1111 (PENNSSHNIVP). The short motif at 1178–1212 (KKRSLEDNETEIKVSRDTWNTKNMRSLEPPRSKKR) is the Bipartite nuclear localization signal element. Residues 1338–1476 (NNYYITQLDI…DILGLEIKYQ (139 aa)) enclose the Reverse transcriptase Ty1/copia-type domain. 6 residues coordinate Mg(2+): Asp1346, Asp1427, Asp1428, Asp1610, Glu1652, and Asp1685. An RNase H Ty1/copia-type domain is found at 1610–1752 (DASYGNQPYY…IKTFKLLTNK (143 aa)).

The capsid protein forms a homotrimer, from which the VLPs are assembled. The protease is a homodimer, whose active site consists of two apposed aspartic acid residues. In terms of processing, initially, virus-like particles (VLPs) are composed of the structural unprocessed proteins Gag and Gag-Pol, and also contain the host initiator methionine tRNA (tRNA(i)-Met) which serves as a primer for minus-strand DNA synthesis, and a dimer of genomic Ty RNA. Processing of the polyproteins occurs within the particle and proceeds by an ordered pathway, called maturation. First, the protease (PR) is released by autocatalytic cleavage of the Gag-Pol polyprotein yielding capsid protein p45 and a Pol-p154 precursor protein. This cleavage is a prerequisite for subsequent processing of Pol-p154 at the remaining sites to release the mature structural and catalytic proteins. Maturation takes place prior to the RT reaction and is required to produce transposition-competent VLPs.

It localises to the cytoplasm. The protein localises to the nucleus. It catalyses the reaction DNA(n) + a 2'-deoxyribonucleoside 5'-triphosphate = DNA(n+1) + diphosphate. The catalysed reaction is Endonucleolytic cleavage to 5'-phosphomonoester.. Functionally, capsid protein (CA) is the structural component of the virus-like particle (VLP), forming the shell that encapsulates the retrotransposons dimeric RNA genome. The particles are assembled from trimer-clustered units and there are holes in the capsid shells that allow for the diffusion of macromolecules. CA also has nucleocapsid-like chaperone activity, promoting primer tRNA(i)-Met annealing to the multipartite primer-binding site (PBS), dimerization of Ty1 RNA and initiation of reverse transcription. Its function is as follows. The aspartyl protease (PR) mediates the proteolytic cleavages of the Gag and Gag-Pol polyproteins after assembly of the VLP. In terms of biological role, reverse transcriptase/ribonuclease H (RT) is a multifunctional enzyme that catalyzes the conversion of the retro-elements RNA genome into dsDNA within the VLP. The enzyme displays a DNA polymerase activity that can copy either DNA or RNA templates, and a ribonuclease H (RNase H) activity that cleaves the RNA strand of RNA-DNA heteroduplexes during plus-strand synthesis and hydrolyzes RNA primers. The conversion leads to a linear dsDNA copy of the retrotransposon that includes long terminal repeats (LTRs) at both ends. Integrase (IN) targets the VLP to the nucleus, where a subparticle preintegration complex (PIC) containing at least integrase and the newly synthesized dsDNA copy of the retrotransposon must transit the nuclear membrane. Once in the nucleus, integrase performs the integration of the dsDNA into the host genome. In Saccharomyces cerevisiae (Baker's yeast), this protein is Transposon TyH3 Gag-Pol polyprotein (TY1B).